The sequence spans 539 residues: Chaperonin GroEL (539 aa).

Residues 29-32, 86-90, glycine 413, 477-479, and aspartate 493 each bind ATP; these read TLGP, DGTTT, and DAL.

The protein belongs to the chaperonin (HSP60) family. Forms a cylinder of 14 subunits composed of two heptameric rings stacked back-to-back. Interacts with the co-chaperonin GroES.

It is found in the cytoplasm. The enzyme catalyses ATP + H2O + a folded polypeptide = ADP + phosphate + an unfolded polypeptide.. Together with its co-chaperonin GroES, plays an essential role in assisting protein folding. The GroEL-GroES system forms a nano-cage that allows encapsulation of the non-native substrate proteins and provides a physical environment optimized to promote and accelerate protein folding. This Clostridium perfringens (strain 13 / Type A) protein is Chaperonin GroEL.